A 296-amino-acid polypeptide reads, in one-letter code: Transcription factor Pur-alpha 1 (296 aa).

Position 1 is an N-acetylmethionine (Met1). 2 disordered regions span residues 1–25 (MEAN…GGGG) and 186–214 (IPGH…EETG). Ser207 bears the Phosphoserine mark.

This sequence belongs to the PUR DNA-binding protein family. In terms of assembly, homodimer. Interacts with TCP20.

The protein localises to the nucleus. Transcription factor that specifically binds the purine-rich double-stranded telomeric repeated sequence 5'-AAACCCTAA-3' found in promoter telo boxes. The polypeptide is Transcription factor Pur-alpha 1 (PURA1) (Arabidopsis thaliana (Mouse-ear cress)).